A 292-amino-acid chain; its full sequence is 4-hydroxy-tetrahydrodipicolinate synthase (292 aa).

Thr-45 lines the pyruvate pocket. Catalysis depends on Tyr-133, which acts as the Proton donor/acceptor. Residue Lys-161 is the Schiff-base intermediate with substrate of the active site. A pyruvate-binding site is contributed by Ile-203.

It belongs to the DapA family. As to quaternary structure, homotetramer; dimer of dimers.

The protein localises to the cytoplasm. The enzyme catalyses L-aspartate 4-semialdehyde + pyruvate = (2S,4S)-4-hydroxy-2,3,4,5-tetrahydrodipicolinate + H2O + H(+). Its pathway is amino-acid biosynthesis; L-lysine biosynthesis via DAP pathway; (S)-tetrahydrodipicolinate from L-aspartate: step 3/4. Functionally, catalyzes the condensation of (S)-aspartate-beta-semialdehyde [(S)-ASA] and pyruvate to 4-hydroxy-tetrahydrodipicolinate (HTPA). The sequence is that of 4-hydroxy-tetrahydrodipicolinate synthase from Vibrio cholerae serotype O1 (strain M66-2).